The chain runs to 692 residues: MGVSWPAKVRRRDGTLVPFDIARIEAAVTRAAREVACDDPDMPGTVAKAVADALGRGIAPVEDIQDCVEARLGEAGLDDVARVYIIYRQRRAELRTAKALLGVRDELKLSLAAVTVLRERYLLHDEQGRPAESTGELMDRSARCVAAAEDQYEPGSSRRWAERFATLLRNLEFLPNSPTLMNSGTDLGLLAGCFVLPIEDSLQSIFATLGQAAELQRAGGGTGYAFSHLRPAGDRVASTGGTASGPVSFLRLYDSAAGVVSMGGRRRGACMAVLDVSHPDICDFVTAKAESPSELPHFNLSVGVTDAFLRAVERNGLHRLVNPRTGKIVARMPAAELFDAICKAAHAGGDPGLVFLDTINRANPVPGRGRIEATNPCGEVPLLPYESCNLGSINLARMLADGRVDWDRLEEVAGVAVRFLDDVIDVSRYPFPELGEAARATRKIGLGVMGLAELLAALGIPYDSEEAVRLATRLMRRIQQAAHTASRRLAEERGAFPAFTDSRFARSGPRRNAQVTSVAPTGTISLIAGTTAGIEPMFAIAFTRAIVGRHLLEVNPCFDRLARDRGFYRDELIAEIAQRGGVRGYPRLPAEVRAAFPTAAEIAPQWHLRMQAAVQRHVEAAVSKTVNLPATATVDDVRAIYVAAWKAKVKGITVYRYGSREGQVLSSAAPKPLLAQADTEFSGGCAGRSCEF.

Residues 7-95 enclose the ATP-cone domain; it reads AKVRRRDGTL…IYRQRRAELR (89 aa). Residues Ser177, 192 to 193, Gly221, 375 to 379, and 520 to 524 contribute to the substrate site; these read GC, NPCGE, and PTGTI. An intrachain disulfide couples Cys193 to Cys388. Catalysis depends on Asn375, which acts as the Proton acceptor. Catalysis depends on Cys377, which acts as the Cysteine radical intermediate. Residue Glu379 is the Proton acceptor of the active site.

The protein belongs to the ribonucleoside diphosphate reductase class-2 family. The cofactor is adenosylcob(III)alamin.

The catalysed reaction is a 2'-deoxyribonucleoside 5'-diphosphate + [thioredoxin]-disulfide + H2O = a ribonucleoside 5'-diphosphate + [thioredoxin]-dithiol. Provides the precursors necessary for DNA synthesis. Catalyzes the biosynthesis of deoxyribonucleotides from the corresponding ribonucleotides. The protein is Vitamin B12-dependent ribonucleoside-diphosphate reductase (nrdZ) of Mycobacterium tuberculosis (strain CDC 1551 / Oshkosh).